Consider the following 80-residue polypeptide: RNA-binding protein Hfq (80 aa).

Residues Asp10–Val70 enclose the Sm domain.

It belongs to the Hfq family. Homohexamer.

Functionally, RNA chaperone that binds small regulatory RNA (sRNAs) and mRNAs to facilitate mRNA translational regulation in response to envelope stress, environmental stress and changes in metabolite concentrations. Also binds with high specificity to tRNAs. The chain is RNA-binding protein Hfq from Desulforamulus reducens (strain ATCC BAA-1160 / DSM 100696 / MI-1) (Desulfotomaculum reducens).